Reading from the N-terminus, the 924-residue chain is Protein SMAX1-LIKE 2 (924 aa).

The Clp R domain occupies isoleucine 8–asparagine 181. Positions leucine 12–leucine 83 are repeat 1. Residues threonine 86–glutamine 105 show a composition bias toward low complexity. A disordered region spans residues threonine 86–proline 107. The interval leucine 109–asparagine 181 is repeat 2. Residues threonine 522–lysine 552 form a disordered region. An EAR motif is present at residues phenylalanine 780–glutamate 784.

Belongs to the ClpA/ClpB family. As to quaternary structure, interacts probably with TPL/TPR in an EAR-motif dependent manner. Expressed in seedlings and leaves. Detected in roots and axillary branches.

Its function is as follows. Probable component of a transcriptional corepressor complex that acts specifically in the karrikin pathway. Controls seedling growth redundantly with SMAX1, but is not involved in leaf morphology, shoot branching or germination control. In Arabidopsis thaliana (Mouse-ear cress), this protein is Protein SMAX1-LIKE 2.